Reading from the N-terminus, the 278-residue chain is NAD kinase (278 aa).

Asp-56 functions as the Proton acceptor in the catalytic mechanism. Residues 56-57 (DG), 132-133 (NE), Arg-158, Asp-160, and 171-176 (TAYNKS) contribute to the NAD(+) site.

The protein belongs to the NAD kinase family. The cofactor is a divalent metal cation.

It is found in the cytoplasm. The catalysed reaction is NAD(+) + ATP = ADP + NADP(+) + H(+). Functionally, involved in the regulation of the intracellular balance of NAD and NADP, and is a key enzyme in the biosynthesis of NADP. Catalyzes specifically the phosphorylation on 2'-hydroxyl of the adenosine moiety of NAD to yield NADP. The polypeptide is NAD kinase (Streptococcus agalactiae serotype III (strain NEM316)).